Consider the following 834-residue polypeptide: RNA-binding protein 12B-B (834 aa).

One can recognise an RRM 1 domain in the interval 154–229 (PYLFLRGLPY…RFIEVMQGSE (76 aa)). A disordered region spans residues 237–277 (GTATEGGDTPRMRSEEHSPSRRINGRHFRKRSHSKSPRARS). Positions 244–255 (DTPRMRSEEHSP) are enriched in basic and acidic residues. A compositionally biased stretch (basic residues) spans 259 to 277 (INGRHFRKRSHSKSPRARS). RRM domains lie at 283 to 359 (FYVH…PVSR) and 401 to 478 (LCIY…LISE). 2 disordered regions span residues 546–572 (GYFRQSDRCSPEDFRHSPEDYRHPWEE) and 621–643 (HFRRSYQEHIRRPPQEHFRRSRE). The span at 550–572 (QSDRCSPEDFRHSPEDYRHPWEE) shows a compositional bias: basic and acidic residues. A Phosphoserine modification is found at serine 701. The RRM 4 domain maps to 758–834 (IRVMISNLPF…GPRKVKLSLL (77 aa)).

In Mus musculus (Mouse), this protein is RNA-binding protein 12B-B (Rbm12b2).